Reading from the N-terminus, the 230-residue chain is MGYLHVLAQRGVIHATWVSALEPVSSNLAAMGDCLRSLRSKGESFLPAPRNILRAFRYPFDSVRVLIVGQDPYPTQGHPIGLSFAVDHKVRPLPGSLQNIYTEYRSDLNLDPPQHGDISLWSERGVMLLNRTLTVRPGIPSSHRGLGWEEITQTAVRALAARDVPLIAILWGRHAQELKSVLQSDRVAILESVHPSPMSATRGFFGSKPFSKANDLLRDLGSAPIDWRLT.

The active-site Proton acceptor is the D71.

Belongs to the uracil-DNA glycosylase (UDG) superfamily. UNG family.

The protein resides in the cytoplasm. It catalyses the reaction Hydrolyzes single-stranded DNA or mismatched double-stranded DNA and polynucleotides, releasing free uracil.. Functionally, excises uracil residues from the DNA which can arise as a result of misincorporation of dUMP residues by DNA polymerase or due to deamination of cytosine. The sequence is that of Uracil-DNA glycosylase from Tropheryma whipplei (strain TW08/27) (Whipple's bacillus).